Here is a 263-residue protein sequence, read N- to C-terminus: uncharacterized protein (263 aa).

The 88-residue stretch at 44-131 (QVYSLGTPNG…YLADKFNHLI (88 aa)) folds into the GST N-terminal domain. In terms of domain architecture, GST C-terminal spans 134 to 263 (DWAQRTEVLN…ALEVDYKAIK (130 aa)).

The protein belongs to the GST superfamily. Homodimer.

This is an uncharacterized protein from Streptococcus mutans serotype c (strain ATCC 700610 / UA159).